The sequence spans 199 residues: MSGPRIGILALQGDVREHARGLTDVGAQPVEVRRAAQLAEVDGLVLPGGESTTIGRLLQVFELLEPLRAAVVAGLPVFGSCAGMILLARDVVDGRPDQPLIGGLDMVVRRNAFGRQVDSFEVDLDVDGVEGPPVHAVFIRAPWVEKAGDAVEVLARVAEAPVAVRQGSLLATAFHPELTGDSRMHRLFVDIVRSSGSGR.

49–51 contributes to the L-glutamine binding site; it reads GES. Cysteine 81 (nucleophile) is an active-site residue. L-glutamine is bound by residues arginine 110 and 139–140; that span reads IR. Catalysis depends on charge relay system residues histidine 175 and glutamate 177.

This sequence belongs to the glutaminase PdxT/SNO family. In the presence of PdxS, forms a dodecamer of heterodimers. Only shows activity in the heterodimer.

It carries out the reaction aldehydo-D-ribose 5-phosphate + D-glyceraldehyde 3-phosphate + L-glutamine = pyridoxal 5'-phosphate + L-glutamate + phosphate + 3 H2O + H(+). The catalysed reaction is L-glutamine + H2O = L-glutamate + NH4(+). The protein operates within cofactor biosynthesis; pyridoxal 5'-phosphate biosynthesis. Its function is as follows. Catalyzes the hydrolysis of glutamine to glutamate and ammonia as part of the biosynthesis of pyridoxal 5'-phosphate. The resulting ammonia molecule is channeled to the active site of PdxS. This chain is Pyridoxal 5'-phosphate synthase subunit PdxT, found in Frankia alni (strain DSM 45986 / CECT 9034 / ACN14a).